Reading from the N-terminus, the 95-residue chain is IgNAR transmembrane form NE (95 aa).

An Ig-like domain is found at 1-36 (LTFSTRSLLNLPAVEWKSGAKYTCTASHSPSQSTVK). Residues 24 to 35 (CTASHSPSQSTV) are compositionally biased toward polar residues. The segment at 24 to 79 (CTASHSPSQSTVKRVIRNPKESPKGSSETRKSPLEIMESPEDYGTEEDQLENVNED) is disordered. Positions 41–56 (NPKESPKGSSETRKSP) are enriched in basic and acidic residues. The span at 61-77 (ESPEDYGTEEDQLENVN) shows a compositional bias: acidic residues. Asn81 carries N-linked (GlcNAc...) asparagine glycosylation.

In terms of tissue distribution, expressed mainly in lymphoid tissues including spleen, epigonal organ and circulating lymphocytes. Also expressed at low levels in the pancreas.

The protein is IgNAR transmembrane form NE of Ginglymostoma cirratum (Nurse shark).